The sequence spans 92 residues: Small ribosomal subunit protein uS19 (92 aa).

It belongs to the universal ribosomal protein uS19 family.

In terms of biological role, protein S19 forms a complex with S13 that binds strongly to the 16S ribosomal RNA. In Exiguobacterium sibiricum (strain DSM 17290 / CCUG 55495 / CIP 109462 / JCM 13490 / 255-15), this protein is Small ribosomal subunit protein uS19.